A 1177-amino-acid polypeptide reads, in one-letter code: DNA-directed RNA polymerase subunit beta' (1177 aa).

Residues Cys60, Cys62, Cys75, and Cys78 each coordinate Zn(2+). Asp450, Asp452, and Asp454 together coordinate Mg(2+). Residues Cys795, Cys869, Cys876, and Cys879 each contribute to the Zn(2+) site.

It belongs to the RNA polymerase beta' chain family. As to quaternary structure, the RNAP catalytic core consists of 2 alpha, 1 beta, 1 beta' and 1 omega subunit. When a sigma factor is associated with the core the holoenzyme is formed, which can initiate transcription. The cofactor is Mg(2+). Zn(2+) serves as cofactor.

It carries out the reaction RNA(n) + a ribonucleoside 5'-triphosphate = RNA(n+1) + diphosphate. In terms of biological role, DNA-dependent RNA polymerase catalyzes the transcription of DNA into RNA using the four ribonucleoside triphosphates as substrates. In Clostridium botulinum (strain Eklund 17B / Type B), this protein is DNA-directed RNA polymerase subunit beta'.